The following is a 1297-amino-acid chain: MLHIFRGTPALSNFRLNQLFSGFQQDNLPIVSCYAEFLHFAHLSEALTEIEREKLEELLRYGPTQKSQEPYGECFVVIPRIGTISSWASKATDIAHNCDLNKVLRLERGIAYYFKFNRTLTAEEEQQLVFRIYDPMMESIVRSPQEAAVLFEQHDPKPFTTVDILTGGHVALEKANVTLGLALAKDEIDYLVENFTALGRNPTDVELYMFAQANSEHCRHKIFNADWIIDGKKQDKSLFKMIKNTFEKTPDYVLSAYKDNAAVMEGSKVGRFFPDQDGQYRYHQEDTHILMKVETHNHPTAISPFPGAATGSGGEIRDEGATGRGAKPKAGLVGFSVSNLCIPNFPQPWENALSKPSRIASALDIMIEGPLGGAAFNNEFGRPALLGYFRTYEEKVNSFNGEEVRGYHKPIMLAGGIGNIRHEHVQKGEIPVGAKLIVLGGAAMNIGLGGGAASSMASGKSKEDLDFASVQRDNPEMERRCQEVIDRCWQLGSENPILFIHDVGAGGLSNAMPELVHDGGRGGRFELRKILCDEKGMSPLEIWCNESQERYVLAVSPEKLPLFEAICQRERASFAVIGEATEQQQLTLQDSHFNNNPIDLPMNILLGKTPKMIRDVKSAKVNNPQLDQSMIQIKEALFRVLRLPAVAEKTFLITIGDRSVTGMVARDQMVGPWQVPVADCAVTTASLDSYHGEAMSIGERTPVALLDFAASARLAVAESITNIAATDIGDIRRIKLSANWMAAAGHGGEDAGLYEAVKAIGEELCPQLGLTIPVGKDSMSMKTTWQEEGYQKSVTAPLSVIISAFARVEDVRKTVTPQLRMDKGDSRLLLIDLGEGKNRLGATALAQVYKQLGDVPADVVNVSLLKGFFNAMQALVKQEKLLAYHDRSDGGLIVTLAEMAFAGHCGISIDISALGDNDLGVLFNEELGAVIQVKESDLKAVRAVLTEHGLIHLTKELGIVTADDHIEITRSTRVLLSEKRSVLRGIWAELTHQMQRLRDNPDCADQEFEMKKDPNDKGLSAYLTYDLNEKITAPYIQKGTKPRIAILREQGVNSHYEMAAAFDRAGFNAIDVHMSDLQKGRHHLQDFNALVACGGFSYGDVLGAGGGWAKSILFNTALRDQFSAFFHRQDTLALGVCNGCQMLSNLAEIIPGTENWGRFVRNKSERFEARVAMVRINNTHSVWFDGMAGSHMPIAVSHGEGRIEFKHDQQLQALKAQNLIAAQYIDSQLNPTEIYPANPNGSAEGITALSNSNGRVAIMMPHPERVFRAVNNSWYPENWQEDGAWMRLFQNARVALG.

Positions Pro304 to Gly323 are disordered. Residues Gly307–Asp318 and Ala678 each bind ATP. Residues Asp679, Glu718, Asn722, and Asp886 each coordinate Mg(2+). Ser888 is an ATP binding site. The 255-residue stretch at Arg1043–Gly1297 folds into the Glutamine amidotransferase type-1 domain. Catalysis depends on Cys1137, which acts as the Nucleophile. Catalysis depends on residues His1262 and Glu1264.

The protein in the N-terminal section; belongs to the FGAMS family. Monomer.

The protein localises to the cytoplasm. It catalyses the reaction N(2)-formyl-N(1)-(5-phospho-beta-D-ribosyl)glycinamide + L-glutamine + ATP + H2O = 2-formamido-N(1)-(5-O-phospho-beta-D-ribosyl)acetamidine + L-glutamate + ADP + phosphate + H(+). Its pathway is purine metabolism; IMP biosynthesis via de novo pathway; 5-amino-1-(5-phospho-D-ribosyl)imidazole from N(2)-formyl-N(1)-(5-phospho-D-ribosyl)glycinamide: step 1/2. Its function is as follows. Phosphoribosylformylglycinamidine synthase involved in the purines biosynthetic pathway. Catalyzes the ATP-dependent conversion of formylglycinamide ribonucleotide (FGAR) and glutamine to yield formylglycinamidine ribonucleotide (FGAM) and glutamate. The polypeptide is Phosphoribosylformylglycinamidine synthase (Histophilus somni (strain 129Pt) (Haemophilus somnus)).